Reading from the N-terminus, the 360-residue chain is Histidinol-phosphate aminotransferase (360 aa).

The residue at position 211 (Lys-211) is an N6-(pyridoxal phosphate)lysine.

Belongs to the class-II pyridoxal-phosphate-dependent aminotransferase family. Histidinol-phosphate aminotransferase subfamily. Homodimer. It depends on pyridoxal 5'-phosphate as a cofactor.

It carries out the reaction L-histidinol phosphate + 2-oxoglutarate = 3-(imidazol-4-yl)-2-oxopropyl phosphate + L-glutamate. It functions in the pathway amino-acid biosynthesis; L-histidine biosynthesis; L-histidine from 5-phospho-alpha-D-ribose 1-diphosphate: step 7/9. This Cronobacter sakazakii (strain ATCC BAA-894) (Enterobacter sakazakii) protein is Histidinol-phosphate aminotransferase.